The chain runs to 1412 residues: MKALLDLFKQVQQEEIFDAIKIGLASPDKIRSWSFGEVKKPETINYRTFKPERDGLFCAKIFGPIKDYECLCGKYKRLKHRGVICEKCGVEVTLAKVRRERMGHIELASPVAHIWFLKSLPSRLGMVLDMTLRDIERVLYFEAYVVIDPGMTPLKARQIMTEEDYYNKVEEYGDEFRAEMGAEGVRELLRSINIDEQVETLRTELKNTGSEAKIKKYAKRLKVLEAFQRSGIKPDWMILEVLPVLPPELRPLVPLDGGRFATSDLNDLYRRVINRNNRLKRLLELKAPEIIVRNEKRMLQEAVDSLLDNGRRGKAMTGANKRPLKSLADMIKGKGGRFRQNLLGKRVDYSGRSVIVVGPTLKLHQCGLPKLMALELFKPFIFNKLEVMGVATTIKAAKKEVENQTPVVWDILEEVIREHPVMLNRAPTLHRLGIQAFEPVLIEGKAIQLHPLVCAAFNADFDGDQMAVHVPLSLEAQMEARTLMLASNNVLFPANGDPSIVPSQDIVLGLYYATREAINGKGEGLSFTGVSEVIRAYENKEVELASRVNVRITEMVRNEDTSEGAPQFVPKISLYATTVGRAILSEILPPGLPFSVLNKPLKKKEISRLINTAFRKCGLRATVVFADQLMQSGFRLATRAGISICVDDMLVPTQKETIVGDAAKKVKEYDRQYMSGLVTAQERYNNVVDIWSATSEAVGKAMMEQLSTEPVIDRDGNETRQESFNSIYMMADSGARGSAVQIRQLAGMRGLMAKPDGSIIETPITANFREGLNVLQYFISTHGARKGLADTALKTANSGYLTRRLVDVTQDLVVVEDDCGTSNGVAMKALVEGGEVVEALRDRILGRVAASDVVNPETQETLYEAGALLDETAVEDIERLGIDEVRVRTALTCETRYGLCASCYGRDLGRGSLVNVGEAVGVIAAQSIGEPGTQLTMRTFHIGGAASRAAVASSVEAKSNGTVRFTASMRYVTNAKGEQIVISRSGEALITDDIGRERERHKIPYGATLLQLDGAAIKAGTQLATWDPLTRPIITEYGGTVKFENVEEGVTVAKQIDDVTGLSTLVVIDVKRRGSQAAKSVRPQVKLLDANGDEVKIPGTEHAVQIGFQVGALITVKDGQQVQVGEVLARIPTESQKTRDITGGLPRVAELFEARSPKDAGILAEVTGTVSFGKDTKGKQRLVITDLEGNQHEFLIAKEKQVLVHDGQVVNKGEMIVDGPADPHDILRLQGIEALSRYIVDEVQDVYRLQGVKINDKHIEVIVRQMLRRVQIVDNGDTRFIPGEQVERSDMLDENDRMIAEDKRPATYDNILLGITKASLSTDSFISAASFQETTRVLTEAAIMGKRDDLRGLKENVIVGRLIPAGTGLAFHKARKAKEQSDRERFDQIAAEEAFEFGTPSAPAEEPQHPAE.

Residues C70, C72, C85, and C88 each contribute to the Zn(2+) site. Mg(2+) is bound by residues D460, D462, and D464. Zn(2+) contacts are provided by C819, C893, C900, and C903. The interval 1393–1412 (EAFEFGTPSAPAEEPQHPAE) is disordered.

This sequence belongs to the RNA polymerase beta' chain family. In terms of assembly, the RNAP catalytic core consists of 2 alpha, 1 beta, 1 beta' and 1 omega subunit. When a sigma factor is associated with the core the holoenzyme is formed, which can initiate transcription. Requires Mg(2+) as cofactor. The cofactor is Zn(2+).

It catalyses the reaction RNA(n) + a ribonucleoside 5'-triphosphate = RNA(n+1) + diphosphate. DNA-dependent RNA polymerase catalyzes the transcription of DNA into RNA using the four ribonucleoside triphosphates as substrates. The chain is DNA-directed RNA polymerase subunit beta' from Burkholderia pseudomallei (strain 1106a).